The sequence spans 130 residues: MSMQDPIADMLTRIRNGQAANKVAVTMPSSKLKVAIANVLKEEGFIEDFKIEGDAKPVLELVLKYFQGKPVVESIQRISRPGLRIYKKKDELPKVMAGLGIAVVSTSKGVMTDRAARQAGLGGEIICYVA.

This sequence belongs to the universal ribosomal protein uS8 family. Part of the 30S ribosomal subunit. Contacts proteins S5 and S12.

One of the primary rRNA binding proteins, it binds directly to 16S rRNA central domain where it helps coordinate assembly of the platform of the 30S subunit. In Edwardsiella ictaluri (strain 93-146), this protein is Small ribosomal subunit protein uS8.